The following is a 169-amino-acid chain: Styrene-oxide isomerase (169 aa).

The next 4 membrane-spanning stretches (helical) occupy residues 13-33, 61-81, 85-105, and 129-149; these read GILM…HLVG, PALN…LGFA, PHLL…FYFF, and FLAL…LAVI.

The protein localises to the membrane. The catalysed reaction is styrene oxide = 2-phenylacetaldehyde. It participates in aromatic compound metabolism. Its function is as follows. Epoxystyrene isomerase that catalyzes the second step in the aerobic styrene degradation pathway by converting epoxystyrene to phenylacetaldehyde. The sequence is that of Styrene-oxide isomerase (styC) from Pseudomonas fluorescens.